The chain runs to 378 residues: UPF0754 membrane protein BT9727_0767 (378 aa).

The next 2 helical transmembrane spans lie at Met-1 to Thr-21 and Tyr-357 to Leu-377.

Belongs to the UPF0754 family.

The protein localises to the cell membrane. This Bacillus thuringiensis subsp. konkukian (strain 97-27) protein is UPF0754 membrane protein BT9727_0767.